Consider the following 370-residue polypeptide: Biotin synthase (370 aa).

Residues 50–276 (FSDGTVDACS…IAVYRFLHPE (227 aa)) enclose the Radical SAM core domain. 3 residues coordinate [4Fe-4S] cluster: Cys-68, Cys-72, and Cys-75. Positions 208 and 280 each coordinate [2Fe-2S] cluster. Positions 328–370 (AGLEPNREANTFDPESVKARHRSPAAETASNANRTNATTETDD) are disordered. A compositionally biased stretch (low complexity) spans 352–370 (AAETASNANRTNATTETDD).

Belongs to the radical SAM superfamily. Biotin synthase family. In terms of assembly, homodimer. Requires [4Fe-4S] cluster as cofactor. It depends on [2Fe-2S] cluster as a cofactor.

It carries out the reaction (4R,5S)-dethiobiotin + (sulfur carrier)-SH + 2 reduced [2Fe-2S]-[ferredoxin] + 2 S-adenosyl-L-methionine = (sulfur carrier)-H + biotin + 2 5'-deoxyadenosine + 2 L-methionine + 2 oxidized [2Fe-2S]-[ferredoxin]. The protein operates within cofactor biosynthesis; biotin biosynthesis; biotin from 7,8-diaminononanoate: step 2/2. Its function is as follows. Catalyzes the conversion of dethiobiotin (DTB) to biotin by the insertion of a sulfur atom into dethiobiotin via a radical-based mechanism. The protein is Biotin synthase of Natronomonas pharaonis (strain ATCC 35678 / DSM 2160 / CIP 103997 / JCM 8858 / NBRC 14720 / NCIMB 2260 / Gabara) (Halobacterium pharaonis).